Reading from the N-terminus, the 492-residue chain is Cytoplasmic dynein 1 light intermediate chain 2 (492 aa).

Residue 61–68 participates in ATP binding; sequence GEDGSGKT. Disordered stretches follow at residues 188–207, 370–423, and 437–492; these read EEGC…GSDE, LAKQ…KNNA, and LSKK…ENEA. Residues Ser-194, Ser-383, and Ser-391 each carry the phosphoserine modification. Positions 370 to 383 are enriched in polar residues; that stretch reads LAKQPATPTRTSES. Arg-397 bears the Omega-N-methylarginine mark. A compositionally biased stretch (polar residues) spans 437–469; that stretch reads LSKKTGSPGSPSAGGVQSTAKKSGQKTVLSNVQ. Phosphothreonine is present on Thr-441. Ser-443 and Ser-446 each carry phosphoserine. Residues 471 to 480 are compositionally biased toward basic and acidic residues; it reads ELDRMTRKPD. Residues 482–492 show a composition bias toward polar residues; the sequence is MVTNSSTENEA.

This sequence belongs to the dynein light intermediate chain family. In terms of assembly, homodimer. The cytoplasmic dynein 1 complex consists of two catalytic heavy chains (HCs) and a number of non-catalytic subunits presented by intermediate chains (ICs), light intermediate chains (LICs) and light chains (LCs); the composition seems to vary in respect to the IC, LIC and LC composition. The heavy chain homodimer serves as a scaffold for the probable homodimeric assembly of the respective non-catalytic subunits. The ICs and LICs bind directly to the HC dimer and the LCs assemble on the IC dimer. Interacts with DYNC1H1; DYNC1LI1 and DYNC1LI2 bind mutually exclusive to DYNC1H.

Its subcellular location is the cytoplasm. It is found in the cytoskeleton. Functionally, acts as one of several non-catalytic accessory components of the cytoplasmic dynein 1 complex that are thought to be involved in linking dynein to cargos and to adapter proteins that regulate dynein function. Cytoplasmic dynein 1 acts as a motor for the intracellular retrograde motility of vesicles and organelles along microtubules. May play a role in binding dynein to membranous organelles or chromosomes. The protein is Cytoplasmic dynein 1 light intermediate chain 2 (Dync1li2) of Mus musculus (Mouse).